Reading from the N-terminus, the 491-residue chain is Adenylosuccinate synthetase, chloroplastic (491 aa).

GTP is bound by residues 78–84 (GDEGKGK) and 106–108 (GHT). Catalysis depends on Asp-79, which acts as the Proton acceptor. Mg(2+) is bound by residues Asp-79 and Gly-106. IMP-binding positions include 79 to 82 (DEGK), 104 to 107 (NAGH), Thr-196, Arg-210, Gln-290, Thr-305, and Arg-369. The Proton donor role is filled by His-107. 365–371 (TTTGRPR) contributes to the substrate binding site. Residues Arg-371, 397–399 (KLD), and 480–482 (GIG) contribute to the GTP site.

The protein belongs to the adenylosuccinate synthetase family. Homodimer. It depends on Mg(2+) as a cofactor.

The protein resides in the plastid. The protein localises to the chloroplast. The catalysed reaction is IMP + L-aspartate + GTP = N(6)-(1,2-dicarboxyethyl)-AMP + GDP + phosphate + 2 H(+). It functions in the pathway purine metabolism; AMP biosynthesis via de novo pathway; AMP from IMP: step 1/2. In terms of biological role, plays an important role in the de novo pathway and in the salvage pathway of purine nucleotide biosynthesis. Catalyzes the first committed step in the biosynthesis of AMP from IMP. This is Adenylosuccinate synthetase, chloroplastic from Populus trichocarpa (Western balsam poplar).